Here is a 498-residue protein sequence, read N- to C-terminus: ATP synthase subunit beta, chloroplastic (498 aa).

ATP is bound at residue 172–179; sequence GGAGVGKT.

It belongs to the ATPase alpha/beta chains family. F-type ATPases have 2 components, CF(1) - the catalytic core - and CF(0) - the membrane proton channel. CF(1) has five subunits: alpha(3), beta(3), gamma(1), delta(1), epsilon(1). CF(0) has four main subunits: a(1), b(1), b'(1) and c(9-12).

It localises to the plastid. The protein resides in the chloroplast thylakoid membrane. The enzyme catalyses ATP + H2O + 4 H(+)(in) = ADP + phosphate + 5 H(+)(out). In terms of biological role, produces ATP from ADP in the presence of a proton gradient across the membrane. The catalytic sites are hosted primarily by the beta subunits. This chain is ATP synthase subunit beta, chloroplastic, found in Illicium oligandrum (Star anise).